Reading from the N-terminus, the 145-residue chain is Male-specific protein scotti (145 aa).

Positions 1 to 34 are disordered; the sequence is MANNRLMPEGQIIEEDMDGEDQNARELDIDDDDD. The segment covering 12-21 has biased composition (acidic residues); it reads IIEEDMDGED.

It belongs to the male-specific scotti family.

Post-meiotically transcribed gene that has a role in late spermiogenesis; required for actin cone progression during spermatid individualization. The protein is Male-specific protein scotti of Drosophila willistoni (Fruit fly).